A 156-amino-acid polypeptide reads, in one-letter code: Small ribosomal subunit protein uS7 (156 aa).

The protein belongs to the universal ribosomal protein uS7 family. As to quaternary structure, part of the 30S ribosomal subunit. Contacts proteins S9 and S11.

Functionally, one of the primary rRNA binding proteins, it binds directly to 16S rRNA where it nucleates assembly of the head domain of the 30S subunit. Is located at the subunit interface close to the decoding center, probably blocks exit of the E-site tRNA. The sequence is that of Small ribosomal subunit protein uS7 from Ralstonia nicotianae (strain ATCC BAA-1114 / GMI1000) (Ralstonia solanacearum).